Consider the following 234-residue polypeptide: Glucosamine-6-phosphate deaminase (234 aa).

Asp-63 acts as the Proton acceptor; for enolization step in catalysis. The active-site For ring-opening step is the Asn-129. The active-site Proton acceptor; for ring-opening step is the His-131. The active-site For ring-opening step is Glu-136.

The protein belongs to the glucosamine/galactosamine-6-phosphate isomerase family. NagB subfamily.

It carries out the reaction alpha-D-glucosamine 6-phosphate + H2O = beta-D-fructose 6-phosphate + NH4(+). Its pathway is amino-sugar metabolism; N-acetylneuraminate degradation; D-fructose 6-phosphate from N-acetylneuraminate: step 5/5. Catalyzes the reversible isomerization-deamination of glucosamine 6-phosphate (GlcN6P) to form fructose 6-phosphate (Fru6P) and ammonium ion. The protein is Glucosamine-6-phosphate deaminase of Listeria monocytogenes serotype 4a (strain HCC23).